The chain runs to 201 residues: Small ribosomal subunit protein uS4 (201 aa).

The S4 RNA-binding domain maps to 91 to 157 (CRLDNVVYRA…TPFIIAKETI (67 aa)).

The protein belongs to the universal ribosomal protein uS4 family. In terms of assembly, part of the 30S ribosomal subunit. Contacts protein S5. The interaction surface between S4 and S5 is involved in control of translational fidelity.

Functionally, one of the primary rRNA binding proteins, it binds directly to 16S rRNA where it nucleates assembly of the body of the 30S subunit. In terms of biological role, with S5 and S12 plays an important role in translational accuracy. The polypeptide is Small ribosomal subunit protein uS4 (Saccharopolyspora erythraea (strain ATCC 11635 / DSM 40517 / JCM 4748 / NBRC 13426 / NCIMB 8594 / NRRL 2338)).